A 636-amino-acid polypeptide reads, in one-letter code: Polyadenylate-binding protein 1 (636 aa).

M1 bears the N-acetylmethionine mark. 4 RRM domains span residues 11-89 (ASLY…WSQR), 99-175 (GNIF…RFKS), 191-268 (TNVY…RAQK), and 294-370 (VNLY…LAQR). The segment at 166-289 (RKVFVGRFKS…FEQMKQDRIT (124 aa)) is UNR-binding. At K299 the chain carries N6-methyllysine. S315 is modified (phosphoserine). The residue at position 319 (T319) is a Phosphothreonine. 4 positions are modified to omega-N-methylarginine: R385, R419, R432, and R436. 2 positions are modified to omega-N-methylated arginine; by CARM1: R455 and R460. Omega-N-methylarginine occurs at positions 475 and 481. Residue R493 is modified to Asymmetric dimethylarginine; alternate. R493 carries the post-translational modification Dimethylated arginine; alternate. R493 bears the Omega-N-methylarginine; alternate mark. R506 is modified (omega-N-methylarginine). K512 is subject to N6-acetyllysine. An Omega-N-methylarginine modification is found at R518. Residues 542 to 619 (QEPLTASMLA…AVAVLQAHQA (78 aa)) form the PABC domain.

The protein belongs to the polyadenylate-binding protein type-1 family. In terms of assembly, may form homodimers. Component of a multisubunit autoregulatory ribonucleoprotein complex (ARC), at least composed of IGF2BP1, PABPC1 and CSDE1. Directly interacts with IGF2BP1. Part of a complex associated with the FOS mCRD domain and consisting of HNRPD, SYNCRIP, PAIP1 and CSDE1/UNR. Interacts with PAIP1 and PAIP2 (via the PABPC1-interacting motifs PAM1 and PAM2). Interacts with PAIP1 with a 1:1 stoichiometry and with PAIP2 with a 1:2 stoichiometry. The interaction with CSDE1 is direct and RNA-independent. Found in a mRNP complex with YBX2. Interacts with TENT2/GLD2. Identified in the spliceosome C complex. Identified in a mRNP complex, at least composed of DHX9, DDX3X, ELAVL1, HNRNPU, IGF2BP1, ILF3, PABPC1, PCBP2, PTBP2, STAU1, STAU2, SYNCRIP and YBX1. The interaction with DDX3X is direct and RNA-independent. This interaction increases in stressed cells and decreases during cell recovery. Identified in a IGF2BP1-dependent mRNP granule complex containing untranslated mRNAs. Interacts with NXF1/TAP. Interacts with PIWIL1. Interacts with AGO1, AGO2, GSPT1 and GSPT2. Interacts with LARP4B. Interacts (via the second and third RRM domains and the C-terminus) with PAIP2B (via central acidic portion and C-terminus). Forms a complex with LARP1 and SHFL. Interacts with LARP4. Interacts with ZFC3H1 in a RNase-sensitive manner. Interacts with TRIM71 (via NHL repeats) in an RNA-dependent manner. Interacts with TENT5C; the interaction has no effect on TENT5C poly(A) polymerase function. Interacts with G3BP1 and G3BP2. Interacts with ENDOV; the interaction is RNA-dependent and stimulates ENDOV activity. Interacts with UPF1; the interaction is RNA-dependent. Interacts with IGF2BP2 and IGF2BP3. May interact with SETX. Interacts with RBM46. Interacts with PAN3 isoform 1/Pan3L and isoform 3/Pan3S (via N-terminus); interaction with isoform 1 is less efficient than with isoform 3. In terms of processing, phosphorylated by MAPKAPK2. Methylated by CARM1. Arg-493 is dimethylated, probably to asymmetric dimethylarginine.

Its subcellular location is the cytoplasm. The protein localises to the stress granule. It localises to the nucleus. It is found in the cell projection. The protein resides in the lamellipodium. Functionally, binds the poly(A) tail of mRNA, including that of its own transcript, and regulates processes of mRNA metabolism such as pre-mRNA splicing and mRNA stability. Its function in translational initiation regulation can either be enhanced by PAIP1 or repressed by PAIP2. Can probably bind to cytoplasmic RNA sequences other than poly(A) in vivo. Binds to N6-methyladenosine (m6A)-containing mRNAs and contributes to MYC stability by binding to m6A-containing MYC mRNAs. Involved in translationally coupled mRNA turnover. Implicated with other RNA-binding proteins in the cytoplasmic deadenylation/translational and decay interplay of the FOS mRNA mediated by the major coding-region determinant of instability (mCRD) domain. Involved in regulation of nonsense-mediated decay (NMD) of mRNAs containing premature stop codons; for the recognition of premature termination codons (PTC) and initiation of NMD a competitive interaction between UPF1 and PABPC1 with the ribosome-bound release factors is proposed. By binding to long poly(A) tails, may protect them from uridylation by ZCCHC6/ZCCHC11 and hence contribute to mRNA stability. The sequence is that of Polyadenylate-binding protein 1 (Pabpc1) from Rattus norvegicus (Rat).